The following is a 116-amino-acid chain: Putative pterin-4-alpha-carbinolamine dehydratase (116 aa).

Belongs to the pterin-4-alpha-carbinolamine dehydratase family.

The enzyme catalyses (4aS,6R)-4a-hydroxy-L-erythro-5,6,7,8-tetrahydrobiopterin = (6R)-L-erythro-6,7-dihydrobiopterin + H2O. The sequence is that of Putative pterin-4-alpha-carbinolamine dehydratase from Xylella fastidiosa (strain M23).